We begin with the raw amino-acid sequence, 151 residues long: Mini-ribonuclease 3 (151 aa).

Aspartate 30 is a catalytic residue.

It belongs to the MrnC RNase family. As to quaternary structure, homodimer. Mg(2+) is required as a cofactor.

Its subcellular location is the cytoplasm. Involved in correct processing of both the 5' and 3' ends of 23S rRNA precursor. Processes 30S rRNA precursor transcript even in absence of ribonuclease 3 (Rnc); Rnc processes 30S rRNA into smaller rRNA precursors. In Thermosynechococcus vestitus (strain NIES-2133 / IAM M-273 / BP-1), this protein is Mini-ribonuclease 3.